We begin with the raw amino-acid sequence, 503 residues long: Dihydropyrimidinase (503 aa).

Residues H66, H68, and K158 each contribute to the Zn(2+) site. At K158 the chain carries N6-carboxylysine. Y163 is a substrate binding site. Zn(2+) is bound by residues H191, H247, and D325. N346 contacts substrate.

The protein belongs to the metallo-dependent hydrolases superfamily. Hydantoinase/dihydropyrimidinase family. Homotetramer. Zn(2+) serves as cofactor. In terms of processing, carboxylation allows a single lysine to coordinate two zinc ions.

The enzyme catalyses 5,6-dihydrouracil + H2O = 3-(carbamoylamino)propanoate + H(+). Catalyzes the second step of the reductive pyrimidine degradation, the reversible hydrolytic ring opening of dihydropyrimidines. Can catalyze the ring opening of 5,6-dihydrouracil to N-carbamyl-alanine and of 5,6-dihydrothymine to N-carbamyl-amino isobutyrate. This chain is Dihydropyrimidinase (pyd2), found in Dictyostelium discoideum (Social amoeba).